The following is a 254-amino-acid chain: Large ribosomal subunit protein uL2 (254 aa).

This sequence belongs to the universal ribosomal protein uL2 family.

The sequence is that of Large ribosomal subunit protein uL2 (RPL2) from Eremothecium gossypii (strain ATCC 10895 / CBS 109.51 / FGSC 9923 / NRRL Y-1056) (Yeast).